The primary structure comprises 117 residues: Large ribosomal subunit protein bL17 (117 aa).

Belongs to the bacterial ribosomal protein bL17 family. Part of the 50S ribosomal subunit. Contacts protein L32.

This is Large ribosomal subunit protein bL17 from Campylobacter lari (strain RM2100 / D67 / ATCC BAA-1060).